Consider the following 291-residue polypeptide: ATP synthase gamma chain (291 aa).

Belongs to the ATPase gamma chain family. In terms of assembly, F-type ATPases have 2 components, CF(1) - the catalytic core - and CF(0) - the membrane proton channel. CF(1) has five subunits: alpha(3), beta(3), gamma(1), delta(1), epsilon(1). CF(0) has three main subunits: a, b and c.

It localises to the cell inner membrane. Its function is as follows. Produces ATP from ADP in the presence of a proton gradient across the membrane. The gamma chain is believed to be important in regulating ATPase activity and the flow of protons through the CF(0) complex. The polypeptide is ATP synthase gamma chain (Syntrophus aciditrophicus (strain SB)).